Here is a 354-residue protein sequence, read N- to C-terminus: Lysophosphatidic acid receptor 3 (354 aa).

The Extracellular segment spans residues 1 to 31 (MNECHYDKRMDFFYNRSNTDTADEWTGTKLV). The N-linked (GlcNAc...) asparagine glycan is linked to asparagine 15. The helical transmembrane segment at 32–52 (IVLCVGTFFCLFIFFSNSLVI) threads the bilayer. The Cytoplasmic segment spans residues 53–67 (AAVITNRKFHFPFYY). The helical transmembrane segment at 68-88 (LLANLAAADFFAGIAYVFLMF) threads the bilayer. The Extracellular portion of the chain corresponds to 89 to 101 (NTGPVSKTLTVNR). A helical membrane pass occupies residues 102–124 (WFLRQGLLDTSLTASLANLLVIA). Residues 125 to 146 (VERHMSIMRMRVHSNLTKKRVT) are Cytoplasmic-facing. A helical membrane pass occupies residues 147–167 (LLILLVWAIAIFMGAVPTLGW). The Extracellular segment spans residues 168–186 (NCLCNISACSSLAPIYSRS). N-linked (GlcNAc...) asparagine glycosylation occurs at asparagine 172. The chain crosses the membrane as a helical span at residues 187-207 (YLIFWTVSNLLAFFIMVAVYV). Over 208–240 (RIYMYVKRKTNVLSPHTSGSISRRRAPMKLMKT) the chain is Cytoplasmic. The chain crosses the membrane as a helical span at residues 241 to 261 (VMTVLGAFVVCWTPGLVVLLL). Residues 262–276 (DGLNCKQCNVQHVKR) are Extracellular-facing. A helical transmembrane segment spans residues 277-295 (WFLLLALLNSVMNPIIYSY). Residues 296-354 (KDEDMYNTMRKMICCALQDSNTERRPSRNPSTIHSRSETGSQYLEDSISQGPVCNKNGS) are Cytoplasmic-facing. Cysteine 309 carries the S-palmitoyl cysteine lipid modification. A disordered region spans residues 315-354 (SNTERRPSRNPSTIHSRSETGSQYLEDSISQGPVCNKNGS). Polar residues predominate over residues 323–354 (RNPSTIHSRSETGSQYLEDSISQGPVCNKNGS).

This sequence belongs to the G-protein coupled receptor 1 family. As to expression, most abundantly expressed in testes, kidney, and lung, with moderate levels in small intestine, and low levels in heart, stomach, spleen, and adult and perinatal brain. Little or no expression in embryonic brain, liver, or thymus.

It is found in the cell membrane. Its function is as follows. Receptor for lysophosphatidic acid (LPA), a mediator of diverse cellular activities. Seems to be coupled to the G(i)/G(o) and G(q) families of heteromeric G proteins. This chain is Lysophosphatidic acid receptor 3 (Lpar3), found in Mus musculus (Mouse).